The primary structure comprises 297 residues: Probable GTP 3',8-cyclase (297 aa).

The 217-residue stretch at 4 to 220 (EFGREIRSFR…VVTRKFMQNR (217 aa)) folds into the Radical SAM core domain. Arginine 13 provides a ligand contact to GTP. Positions 20 and 24 each coordinate [4Fe-4S] cluster. Tyrosine 26 provides a ligand contact to S-adenosyl-L-methionine. A [4Fe-4S] cluster-binding site is contributed by cysteine 27. Position 61 (lysine 61) interacts with GTP. An S-adenosyl-L-methionine-binding site is contributed by glycine 65. Threonine 91 is a GTP binding site. Serine 115 is a binding site for S-adenosyl-L-methionine. Lysine 151 is a binding site for GTP. The [4Fe-4S] cluster site is built by cysteine 242 and cysteine 245. 247 to 249 (RIR) lines the GTP pocket. A [4Fe-4S] cluster-binding site is contributed by cysteine 259.

This sequence belongs to the radical SAM superfamily. MoaA family. It depends on [4Fe-4S] cluster as a cofactor.

The enzyme catalyses GTP + AH2 + S-adenosyl-L-methionine = (8S)-3',8-cyclo-7,8-dihydroguanosine 5'-triphosphate + 5'-deoxyadenosine + L-methionine + A + H(+). The protein operates within cofactor biosynthesis; molybdopterin biosynthesis. Its function is as follows. Catalyzes the cyclization of GTP to (8S)-3',8-cyclo-7,8-dihydroguanosine 5'-triphosphate. The polypeptide is Probable GTP 3',8-cyclase (Methanococcus vannielii (strain ATCC 35089 / DSM 1224 / JCM 13029 / OCM 148 / SB)).